Consider the following 320-residue polypeptide: Lipoyl synthase (320 aa).

A disordered region spans residues 1–29 (MVTVVDRVTNRRLRHPEKAHRPDTSVQKK). Residues 19-29 (AHRPDTSVQKK) show a composition bias toward basic and acidic residues. Residues Cys-59, Cys-64, Cys-70, Cys-85, Cys-89, Cys-92, and Ser-298 each contribute to the [4Fe-4S] cluster site. Positions 71–287 (WSQRHASFMI…AKIGKVKGFL (217 aa)) constitute a Radical SAM core domain.

Belongs to the radical SAM superfamily. Lipoyl synthase family. It depends on [4Fe-4S] cluster as a cofactor.

It localises to the cytoplasm. The enzyme catalyses [[Fe-S] cluster scaffold protein carrying a second [4Fe-4S](2+) cluster] + N(6)-octanoyl-L-lysyl-[protein] + 2 oxidized [2Fe-2S]-[ferredoxin] + 2 S-adenosyl-L-methionine + 4 H(+) = [[Fe-S] cluster scaffold protein] + N(6)-[(R)-dihydrolipoyl]-L-lysyl-[protein] + 4 Fe(3+) + 2 hydrogen sulfide + 2 5'-deoxyadenosine + 2 L-methionine + 2 reduced [2Fe-2S]-[ferredoxin]. The protein operates within protein modification; protein lipoylation via endogenous pathway; protein N(6)-(lipoyl)lysine from octanoyl-[acyl-carrier-protein]: step 2/2. Catalyzes the radical-mediated insertion of two sulfur atoms into the C-6 and C-8 positions of the octanoyl moiety bound to the lipoyl domains of lipoate-dependent enzymes, thereby converting the octanoylated domains into lipoylated derivatives. The sequence is that of Lipoyl synthase from Bartonella tribocorum (strain CIP 105476 / IBS 506).